The following is a 328-amino-acid chain: Biotin synthase (328 aa).

The Radical SAM core domain maps to 48–278 (FTGNSASLCS…GKSLSVCGGR (231 aa)). C66, C70, and C73 together coordinate [4Fe-4S] cluster. Residues S143 and C203 each contribute to the [2Fe-2S] cluster site.

The protein belongs to the radical SAM superfamily. Biotin synthase family. As to quaternary structure, homodimer. Requires [4Fe-4S] cluster as cofactor. It depends on [2Fe-2S] cluster as a cofactor.

The enzyme catalyses (4R,5S)-dethiobiotin + (sulfur carrier)-SH + 2 reduced [2Fe-2S]-[ferredoxin] + 2 S-adenosyl-L-methionine = (sulfur carrier)-H + biotin + 2 5'-deoxyadenosine + 2 L-methionine + 2 oxidized [2Fe-2S]-[ferredoxin]. The protein operates within cofactor biosynthesis; biotin biosynthesis; biotin from 7,8-diaminononanoate: step 2/2. Its function is as follows. Catalyzes the conversion of dethiobiotin (DTB) to biotin by the insertion of a sulfur atom into dethiobiotin via a radical-based mechanism. This chain is Biotin synthase, found in Pelobacter propionicus (strain DSM 2379 / NBRC 103807 / OttBd1).